Consider the following 333-residue polypeptide: Cytochrome f (333 aa).

The signal sequence occupies residues 1–44 (MRNACTRARLTRTARAMVKTLFIAIASVTFFFTSDLALPQSAAA). 4 residues coordinate heme: Y45, C66, C69, and H70. The helical transmembrane segment at 299–318 (VGWLIAFVALVMLAQVMLVL) threads the bilayer.

Belongs to the cytochrome f family. As to quaternary structure, the 4 large subunits of the cytochrome b6-f complex are cytochrome b6, subunit IV (17 kDa polypeptide, PetD), cytochrome f and the Rieske protein, while the 4 small subunits are PetG, PetL, PetM and PetN. The complex functions as a dimer. Heme serves as cofactor.

The protein resides in the cellular thylakoid membrane. Its function is as follows. Component of the cytochrome b6-f complex, which mediates electron transfer between photosystem II (PSII) and photosystem I (PSI), cyclic electron flow around PSI, and state transitions. This Nostoc sp. (strain PCC 7120 / SAG 25.82 / UTEX 2576) protein is Cytochrome f.